The following is a 337-amino-acid chain: Viral cathepsin (337 aa).

An N-terminal signal peptide occupies residues 1-16 (MNKLLILFLLLNAALT). Positions 17–126 (RQDNHASANN…VVDGPAQRQR (110 aa)) are cleaved as a propeptide — activation peptide. Cystine bridges form between cysteine 147–cysteine 188, cysteine 181–cysteine 221, and cysteine 276–cysteine 324. Cysteine 150 is a catalytic residue. Active-site residues include histidine 283 and asparagine 303.

The protein belongs to the peptidase C1 family. In terms of processing, synthesized as an inactive proenzyme and activated by proteolytic removal of the inhibitory propeptide.

It carries out the reaction Endopeptidase of broad specificity, hydrolyzing substrates of both cathepsin L and cathepsin B.. Cysteine protease that plays an essential role in host liquefaction to facilitate horizontal transmission of the virus. May participate in the degradation of foreign protein expressed by the baculovirus system. This chain is Viral cathepsin (VCATH), found in Lepidoptera (butterflies and moths).